We begin with the raw amino-acid sequence, 489 residues long: Cysteine--tRNA ligase (489 aa).

A Zn(2+)-binding site is contributed by Cys27. Positions 29-39 (VTVYDLCHLGH) match the 'HIGH' region motif. Zn(2+)-binding residues include Cys211, His236, and Glu240. The short motif at 268-272 (KMSKS) is the 'KMSKS' region element. Lys271 is a binding site for ATP.

Belongs to the class-I aminoacyl-tRNA synthetase family. In terms of assembly, monomer. It depends on Zn(2+) as a cofactor.

It localises to the cytoplasm. The catalysed reaction is tRNA(Cys) + L-cysteine + ATP = L-cysteinyl-tRNA(Cys) + AMP + diphosphate. In Prochlorococcus marinus (strain MIT 9312), this protein is Cysteine--tRNA ligase.